A 560-amino-acid chain; its full sequence is Probable pectinesterase/pectinesterase inhibitor 20 (560 aa).

Residues 1–24 (MSQKLMFLFTLACLSSLPSPFISA) form the signal peptide. The tract at residues 25–179 (QIPAIGNATS…TKLYGVSLAL (155 aa)) is pectinesterase inhibitor 20. N-linked (GlcNAc...) asparagine glycans are attached at residues asparagine 31, asparagine 168, asparagine 251, asparagine 255, asparagine 268, asparagine 307, and asparagine 314. The pectinesterase 20 stretch occupies residues 246-544 (VTVIQNGTGN…FTVTNFLVGE (299 aa)). Residue threonine 323 participates in substrate binding. An N-linked (GlcNAc...) asparagine glycan is attached at asparagine 340. Glutamine 353 contacts substrate. Aspartate 376 (proton donor; for pectinesterase activity) is an active-site residue. Cysteine 390 and cysteine 410 form a disulfide bridge. Residue aspartate 397 is the Nucleophile; for pectinesterase activity of the active site. Residues 417–441 (PRKGQSNEVTAQGRTDPNQNTGTAI) form a disordered region. The segment covering 419-439 (KGQSNEVTAQGRTDPNQNTGT) has biased composition (polar residues). The N-linked (GlcNAc...) asparagine glycan is linked to asparagine 456. Arginine 465 and tryptophan 467 together coordinate substrate. N-linked (GlcNAc...) asparagine glycans are attached at residues asparagine 507, asparagine 528, and asparagine 534.

In the N-terminal section; belongs to the PMEI family. The protein in the C-terminal section; belongs to the pectinesterase family. In terms of tissue distribution, expressed in flower buds.

It localises to the secreted. It is found in the cell wall. The catalysed reaction is [(1-&gt;4)-alpha-D-galacturonosyl methyl ester](n) + n H2O = [(1-&gt;4)-alpha-D-galacturonosyl](n) + n methanol + n H(+). Its pathway is glycan metabolism; pectin degradation; 2-dehydro-3-deoxy-D-gluconate from pectin: step 1/5. Its function is as follows. Acts in the modification of cell walls via demethylesterification of cell wall pectin. This chain is Probable pectinesterase/pectinesterase inhibitor 20 (PME20), found in Arabidopsis thaliana (Mouse-ear cress).